A 465-amino-acid polypeptide reads, in one-letter code: GTPase Der (465 aa).

2 EngA-type G domains span residues 27–190 (PVLA…PEAP) and 202–375 (RRIA…AGWE). Residues 33–40 (GRPNVGKS), 80–84 (DTGGW), 142–145 (NKVD), 208–215 (GRPNVGKS), 255–259 (DTAGI), and 320–323 (NKWD) contribute to the GTP site. In terms of domain architecture, KH-like spans 376–458 (TRVPTGRLNA…PIHISVRVRE (83 aa)).

It belongs to the TRAFAC class TrmE-Era-EngA-EngB-Septin-like GTPase superfamily. EngA (Der) GTPase family. In terms of assembly, associates with the 50S ribosomal subunit.

In terms of biological role, GTPase that plays an essential role in the late steps of ribosome biogenesis. The protein is GTPase Der of Streptomyces coelicolor (strain ATCC BAA-471 / A3(2) / M145).